The chain runs to 63 residues: Large ribosomal subunit protein uL30 (63 aa).

The protein belongs to the universal ribosomal protein uL30 family. Part of the 50S ribosomal subunit.

The polypeptide is Large ribosomal subunit protein uL30 (Chlorobium chlorochromatii (strain CaD3)).